The sequence spans 241 residues: Ribonuclease PH (241 aa).

Phosphate-binding positions include R89 and 127–129; that span reads GTR.

Belongs to the RNase PH family. In terms of assembly, homohexameric ring arranged as a trimer of dimers.

It catalyses the reaction tRNA(n+1) + phosphate = tRNA(n) + a ribonucleoside 5'-diphosphate. In terms of biological role, phosphorolytic 3'-5' exoribonuclease that plays an important role in tRNA 3'-end maturation. Removes nucleotide residues following the 3'-CCA terminus of tRNAs; can also add nucleotides to the ends of RNA molecules by using nucleoside diphosphates as substrates, but this may not be physiologically important. Probably plays a role in initiation of 16S rRNA degradation (leading to ribosome degradation) during starvation. This is Ribonuclease PH from Xylella fastidiosa (strain 9a5c).